A 346-amino-acid chain; its full sequence is Guanine nucleotide-binding protein subunit beta-2 (346 aa).

WD repeat units follow at residues glycine 57–isoleucine 96, leucine 99–valine 138, glycine 147–aspartate 185, glycine 188–methionine 227, glycine 230–glutamine 269, glutamine 274–threonine 313, and glycine 316–leucine 346.

It belongs to the WD repeat G protein beta family. In terms of assembly, g proteins are composed of 3 units, alpha, beta and gamma. Interacts with Ggamma30A/Guanine nucleotide-binding protein subunit gamma-e. Expressed exclusively in photoreceptor cells in the compound eye (at protein level).

It is found in the cytoplasm. It localises to the cell projection. The protein resides in the axon. The protein localises to the rhabdomere. Guanine nucleotide-binding proteins (G proteins) are involved as a modulator or transducer in various transmembrane signaling systems. The beta and gamma chains are required for the GTPase activity, for replacement of GDP by GTP, and for G protein-effector interaction. This chain is Guanine nucleotide-binding protein subunit beta-2 (Gbeta76C), found in Drosophila melanogaster (Fruit fly).